Consider the following 376-residue polypeptide: NifS-like protein (376 aa).

Residues 58-59 (SE) and 184-186 (SLN) contribute to the pyridoxal 5'-phosphate site.

This sequence belongs to the class-V pyridoxal-phosphate-dependent aminotransferase family. NifS/IscS subfamily. Pyridoxal 5'-phosphate is required as a cofactor.

It localises to the virion. The protein is NifS-like protein of African swine fever virus (isolate Tick/Malawi/Lil 20-1/1983) (ASFV).